A 66-amino-acid chain; its full sequence is U-limacoditoxin(59)-Dv128 (66 aa).

The signal sequence occupies residues 1–20; sequence MRHLLVLLLICLSVIAMAQA. The tract at residues 21-66 is 3 X 16 AA tandem repeats of [FI]-G-G-G-L-G-G-A-V-G-G-R-R-R-R-D; it reads TFGGGLGGAVGGRRRRDIGGGLGGAVGGRRRRDIGGGLGGAVGGKS. A run of 2 repeats spans residues 22 to 37 and 38 to 53. Position 31 is a glycine amide (Gly31). Positions 33-37 are excised as a propeptide; the sequence is RRRRD. Glycine amide is present on Gly47. The propeptide occupies 49–53; sequence RRRRD. Residues 54-64 form a 3; half-length repeat; that stretch reads IGGGLGGAVGG.

The protein belongs to the limacoditoxin-59 family. In terms of tissue distribution, expressed by the venom secretory cell of the spine. The spine is a cuticular structure containing a single large nucleated venom-secreting cell at its base. It is an independent unit capable of producing, storing and injecting venom. On the back of D.vulnerans caterpillars, spines are grouped together by 50 to 100 to form scoli, of which there are eight in D.vulnerans.

The protein resides in the secreted. Functionally, probable toxin. The polypeptide is U-limacoditoxin(59)-Dv128 (Doratifera vulnerans (Mottled cup moth)).